The primary structure comprises 505 residues: Probable alpha-L-arabinofuranosidase C (505 aa).

3 N-linked (GlcNAc...) asparagine glycosylation sites follow: Asn-152, Asn-181, and Asn-269.

This sequence belongs to the glycosyl hydrolase 51 family.

Its subcellular location is the secreted. The catalysed reaction is Hydrolysis of terminal non-reducing alpha-L-arabinofuranoside residues in alpha-L-arabinosides.. Its pathway is glycan metabolism; L-arabinan degradation. Its function is as follows. Alpha-L-arabinofuranosidase involved in the degradation of arabinoxylan, a major component of plant hemicellulose. Acts only on small linear 1,5-alpha-linked L-arabinofuranosyl oligosaccharides. In Aspergillus niger (strain ATCC MYA-4892 / CBS 513.88 / FGSC A1513), this protein is Probable alpha-L-arabinofuranosidase C (abfC).